Reading from the N-terminus, the 74-residue chain is UPF0346 protein SE_1114 (74 aa).

The protein belongs to the UPF0346 family.

The polypeptide is UPF0346 protein SE_1114 (Staphylococcus epidermidis (strain ATCC 12228 / FDA PCI 1200)).